Consider the following 85-residue polypeptide: Beta-insect depressant toxin BjIT2 (85 aa).

A signal peptide spans 1-21 (MKLLLLLVISASMLLECLVNA). In terms of domain architecture, LCN-type CS-alpha/beta spans 22-82 (DGYIRKKDGC…TWKSSTNTCG (61 aa)). Cystine bridges form between Cys-31–Cys-81, Cys-35–Cys-56, Cys-42–Cys-63, and Cys-46–Cys-65. Positions 83-85 (RKK) are cleaved as a propeptide — removed by a carboxypeptidase.

The protein belongs to the long (4 C-C) scorpion toxin superfamily. Sodium channel inhibitor family. Beta subfamily. In terms of processing, C-terminal basic residues are removed by a carboxypeptidase. As to expression, expressed by the venom gland.

It is found in the secreted. Depressant insect beta-toxins cause a transient contraction paralysis followed by a slow flaccid paralysis. They bind voltage-independently at site-4 of sodium channels (Nav) and shift the voltage of activation toward more negative potentials thereby affecting sodium channel activation and promoting spontaneous and repetitive firing. This toxin is active only on insects. The polypeptide is Beta-insect depressant toxin BjIT2 (Hottentotta judaicus (Black scorpion)).